Here is a 1379-residue protein sequence, read N- to C-terminus: DNA-directed RNA polymerase subunit beta (1379 aa).

Belongs to the RNA polymerase beta chain family. The RNAP catalytic core consists of 2 alpha, 1 beta, 1 beta' and 1 omega subunit. When a sigma factor is associated with the core the holoenzyme is formed, which can initiate transcription.

The catalysed reaction is RNA(n) + a ribonucleoside 5'-triphosphate = RNA(n+1) + diphosphate. Its function is as follows. DNA-dependent RNA polymerase catalyzes the transcription of DNA into RNA using the four ribonucleoside triphosphates as substrates. The polypeptide is DNA-directed RNA polymerase subunit beta (Rhizobium johnstonii (strain DSM 114642 / LMG 32736 / 3841) (Rhizobium leguminosarum bv. viciae)).